The primary structure comprises 250 residues: MKTAAYADYLIQWLENQRTELYGMDGYTLGVSGGIDSAVCAHLAARTGAPVQALILPAEVTSPSDVADAQATLESAGIDGQIISIAPWYDLIMQQLSPVLNSEPERVNVLKGNLMARLRMIALFTTAQSHRSIVLGTDNAAEWLTGYFTKFGDGAADVLPLAGLRKEQVFELGRYLGVPQSVLDKKPSAGLWAGQTDEAEMGVTYAEIDAYLRGETVSPQALQQIRFWHNRSHHKRMLPPKPKSPDEAEC.

30–37 provides a ligand contact to ATP; sequence GVSGGIDS. Asp-36 serves as a coordination point for Mg(2+). Deamido-NAD(+) is bound at residue Arg-117. Thr-137 serves as a coordination point for ATP. Glu-142 is a Mg(2+) binding site. Positions 150 and 157 each coordinate deamido-NAD(+). Positions 166 and 188 each coordinate ATP. Position 234–235 (234–235) interacts with deamido-NAD(+); the sequence is HK.

The protein belongs to the NAD synthetase family. Homodimer.

It catalyses the reaction deamido-NAD(+) + NH4(+) + ATP = AMP + diphosphate + NAD(+) + H(+). It functions in the pathway cofactor biosynthesis; NAD(+) biosynthesis; NAD(+) from deamido-NAD(+) (ammonia route): step 1/1. Its function is as follows. Catalyzes the ATP-dependent amidation of deamido-NAD to form NAD. Uses ammonia as a nitrogen source. In Mannheimia succiniciproducens (strain KCTC 0769BP / MBEL55E), this protein is NH(3)-dependent NAD(+) synthetase.